Here is a 317-residue protein sequence, read N- to C-terminus: DNA-directed RNA polymerase subunit alpha (317 aa).

The interval 1–234 (MKQFVRPEFI…AHLEFFIDLN (234 aa)) is alpha N-terminal domain (alpha-NTD). Residues 249 to 317 (DDKELDRTVE…ASLGLAFRQS (69 aa)) form an alpha C-terminal domain (alpha-CTD) region.

Belongs to the RNA polymerase alpha chain family. As to quaternary structure, homodimer. The RNAP catalytic core consists of 2 alpha, 1 beta, 1 beta' and 1 omega subunit. When a sigma factor is associated with the core the holoenzyme is formed, which can initiate transcription.

The catalysed reaction is RNA(n) + a ribonucleoside 5'-triphosphate = RNA(n+1) + diphosphate. DNA-dependent RNA polymerase catalyzes the transcription of DNA into RNA using the four ribonucleoside triphosphates as substrates. The sequence is that of DNA-directed RNA polymerase subunit alpha from Mycoplasma capricolum subsp. capricolum (strain California kid / ATCC 27343 / NCTC 10154).